The chain runs to 75 residues: MPHVDIKCFPRELTDEQKTALAADITEVLIRHLNSKESAVSVALTQVEPDAWQAVWDSEIAPQMAQLIKKPGYSM.

The active-site Proton acceptor; via imino nitrogen is the Pro2.

Belongs to the 4-oxalocrotonate tautomerase family. PptA subfamily. As to quaternary structure, homodimer.

The protein localises to the cytoplasm. This is Tautomerase PptA from Klebsiella pneumoniae (strain 342).